The sequence spans 474 residues: Lysosomal protective protein (474 aa).

A signal peptide spans Met1–Ala23. Cystine bridges form between Cys83-Cys356, Cys235-Cys251, Cys236-Cys241, and Cys276-Cys325. A glycan (N-linked (GlcNAc...) (high mannose) asparagine) is linked at Asn140. Residue Ser173 is part of the active site. An N-linked (GlcNAc...) (high mannose) asparagine glycan is attached at Asn327. Residues Asp394 and His451 contribute to the active site.

Belongs to the peptidase S10 family. In terms of assembly, heterodimer of a 32 kDa chain and a 20 kDa chain; disulfide-linked.

The protein resides in the lysosome. It carries out the reaction Release of a C-terminal amino acid with broad specificity.. Protective protein appears to be essential for both the activity of beta-galactosidase and neuraminidase, it associates with these enzymes and exerts a protective function necessary for their stability and activity. This protein is also a carboxypeptidase and can deamidate tachykinins. In Mus musculus (Mouse), this protein is Lysosomal protective protein (Ctsa).